The sequence spans 292 residues: Mitochondrial fission regulator 1-like (292 aa).

Position 30 is a phosphothreonine (Thr-30). Residue Ser-41 is modified to Phosphoserine. Ser-103 carries the post-translational modification Phosphoserine; by AMPK. Phosphoserine is present on residues Ser-110, Ser-224, and Ser-225. The residue at position 238 (Ser-238) is a Phosphoserine; by AMPK. Phosphoserine occurs at positions 261 and 273.

It belongs to the MTFR1 family. Post-translationally, phosphorylated by AMPK. Upon stress, phosphorylation at Ser-103 and Ser-238 by AMPK is sufficient to induce mitochondrial fragmentation.

It is found in the mitochondrion outer membrane. Mitochondrial protein required for adaptation of miochondrial dynamics to metabolic changes. Regulates mitochondrial morphology at steady state and mediates AMPK-dependent stress-induced mitochondrial fragmentation via the control of OPA1 levels. The polypeptide is Mitochondrial fission regulator 1-like (Homo sapiens (Human)).